The primary structure comprises 254 residues: 5-oxoprolinase subunit A (254 aa).

It belongs to the LamB/PxpA family. In terms of assembly, forms a complex composed of PxpA, PxpB and PxpC.

It carries out the reaction 5-oxo-L-proline + ATP + 2 H2O = L-glutamate + ADP + phosphate + H(+). Its function is as follows. Catalyzes the cleavage of 5-oxoproline to form L-glutamate coupled to the hydrolysis of ATP to ADP and inorganic phosphate. This Burkholderia vietnamiensis (strain G4 / LMG 22486) (Burkholderia cepacia (strain R1808)) protein is 5-oxoprolinase subunit A.